The chain runs to 81 residues: EC protein III (81 aa).

This sequence belongs to the metallothionein superfamily. Type 15 family.

Binds 5 molecules of zinc. May have a role in Zn(2+) homeostasis during embryogenesis. In Triticum aestivum (Wheat), this protein is EC protein III.